The sequence spans 350 residues: Ribosomal RNA large subunit methyltransferase M (350 aa).

S-adenosyl-L-methionine-binding positions include Ser-184, 217–220 (APGG), Asp-236, Asp-256, and Asp-272. Catalysis depends on Lys-301, which acts as the Proton acceptor.

The protein belongs to the class I-like SAM-binding methyltransferase superfamily. RNA methyltransferase RlmE family. RlmM subfamily. In terms of assembly, monomer.

Its subcellular location is the cytoplasm. The enzyme catalyses cytidine(2498) in 23S rRNA + S-adenosyl-L-methionine = 2'-O-methylcytidine(2498) in 23S rRNA + S-adenosyl-L-homocysteine + H(+). Functionally, catalyzes the 2'-O-methylation at nucleotide C2498 in 23S rRNA. This chain is Ribosomal RNA large subunit methyltransferase M, found in Marinomonas sp. (strain MWYL1).